The chain runs to 509 residues: Kynureninase 1 (509 aa).

Residues leucine 169, threonine 170, 197–200 (FPSD), aspartate 283, histidine 286, and tyrosine 308 contribute to the pyridoxal 5'-phosphate site. At lysine 309 the chain carries N6-(pyridoxal phosphate)lysine. 2 residues coordinate pyridoxal 5'-phosphate: tryptophan 349 and asparagine 377.

It belongs to the kynureninase family. As to quaternary structure, homodimer. Requires pyridoxal 5'-phosphate as cofactor.

The protein localises to the cytoplasm. The catalysed reaction is L-kynurenine + H2O = anthranilate + L-alanine + H(+). It carries out the reaction 3-hydroxy-L-kynurenine + H2O = 3-hydroxyanthranilate + L-alanine + H(+). Its pathway is amino-acid degradation; L-kynurenine degradation; L-alanine and anthranilate from L-kynurenine: step 1/1. The protein operates within cofactor biosynthesis; NAD(+) biosynthesis; quinolinate from L-kynurenine: step 2/3. Its function is as follows. Catalyzes the cleavage of L-kynurenine (L-Kyn) and L-3-hydroxykynurenine (L-3OHKyn) into anthranilic acid (AA) and 3-hydroxyanthranilic acid (3-OHAA), respectively. This is Kynureninase 1 (bna5-1) from Aspergillus fumigatus (strain CBS 144.89 / FGSC A1163 / CEA10) (Neosartorya fumigata).